The primary structure comprises 178 residues: MPLRPGRCYRHFSGPAYTRKEYIPGIPQPKITKFTSGNPNGDYDYEVRLITTEIGQIRHNALEAVRTITLKTLTKRTGSETSFFMWILKYPHHVLRENKMMAFAGADRLQDGMRLSFGTPIGTAARIEKLGEILIVVKVKKEHLDFAKEALKIASKKLPLRTRIEIIPLRPIRQEVQS.

This sequence belongs to the universal ribosomal protein uL16 family.

This is Large ribosomal subunit protein uL16 from Saccharolobus islandicus (strain Y.N.15.51 / Yellowstone #2) (Sulfolobus islandicus).